A 70-amino-acid polypeptide reads, in one-letter code: Small ribosomal subunit protein bS21 (70 aa).

It belongs to the bacterial ribosomal protein bS21 family.

The polypeptide is Small ribosomal subunit protein bS21 (Nitratiruptor sp. (strain SB155-2)).